The sequence spans 403 residues: Serine/threonine-protein phosphatase 4 regulatory subunit 2-A (403 aa).

Composition is skewed to polar residues over residues Glu140–Arg149, Pro156–Gly170, and Ser183–Ser196. Residues Glu140–Asp403 form a disordered region. A compositionally biased stretch (basic and acidic residues) spans Thr197–Gln211. Composition is skewed to polar residues over residues Ser212–Ser226 and Ala371–Glu387. The span at Asn388–Asp403 shows a compositional bias: acidic residues.

It belongs to the PPP4R2 family. As to quaternary structure, serine/threonine-protein phosphatase 4 (PP4) occurs in different assemblies of the catalytic and one or more regulatory subunits.

Its function is as follows. Regulatory subunit of serine/threonine-protein phosphatase 4 (PP4). This is Serine/threonine-protein phosphatase 4 regulatory subunit 2-A (ppp4r2-a) from Xenopus laevis (African clawed frog).